Here is a 618-residue protein sequence, read N- to C-terminus: Structural protein ORF618 (618 aa).

Residues 570–598 (ILEAKRQIEDRAKGLSKNLDNTVTEIMNA) are a coiled coil.

The protein resides in the virion. The polypeptide is Structural protein ORF618 (Acidianus two-tailed virus (ATV)).